Consider the following 171-residue polypeptide: Putative defense protein (171 aa).

Residues 1–23 form the signal peptide; it reads MKVYACLCAAVVMLVMTSRVSEA. A Reelin domain is found at 24–171; it reads RSTGAPLSAC…VQSAPIKIVS (148 aa). Cysteine 33 and cysteine 110 form a disulfide bridge. The N-linked (GlcNAc...) asparagine glycan is linked to asparagine 41.

This sequence belongs to the insect defense protein family.

It is found in the secreted. May have antimicrobial activity. The sequence is that of Putative defense protein from Bombyx mori (Silk moth).